Consider the following 304-residue polypeptide: Polyisoprenyl-teichoic acid--peptidoglycan teichoic acid transferase TagU (304 aa).

The Cytoplasmic portion of the chain corresponds to 1 to 4; it reads MKKK. The chain crosses the membrane as a helical; Signal-anchor for type II membrane protein span at residues 5–25; that stretch reads ILFWILGIIGIMIIGGGVYAY. Over 26 to 304 the chain is Extracellular; sequence NVYSSVSKTL…KLRAHLELTK (279 aa).

This sequence belongs to the LytR/CpsA/Psr (LCP) family.

Its subcellular location is the cell membrane. Its pathway is cell wall biogenesis. May catalyze the final step in cell wall teichoic acid biosynthesis, the transfer of the anionic cell wall polymers (APs) from their lipid-linked precursor to the cell wall peptidoglycan (PG). The sequence is that of Polyisoprenyl-teichoic acid--peptidoglycan teichoic acid transferase TagU from Bacillus mycoides (strain KBAB4) (Bacillus weihenstephanensis).